The primary structure comprises 220 residues: Probable septum site-determining protein MinC (220 aa).

Belongs to the MinC family. In terms of assembly, interacts with MinD and FtsZ.

In terms of biological role, cell division inhibitor that blocks the formation of polar Z ring septums. Rapidly oscillates between the poles of the cell to destabilize FtsZ filaments that have formed before they mature into polar Z rings. Prevents FtsZ polymerization. The protein is Probable septum site-determining protein MinC of Vibrio parahaemolyticus serotype O3:K6 (strain RIMD 2210633).